Here is a 516-residue protein sequence, read N- to C-terminus: MNALSEHILSELRRLLSEMSDGGSVGPSVYDTAQALRFHGNVTGRQDAYAWLIAQQQADGGWGSADFPLFRHAPTWAALLALQRADPLPGAADAVQTATRFLQRQPDPYAHAVPEDAPIGAELILPQFCGEAASLLGGVAFPRHPALLPLRQACLVKLGAVAMLPSGHPLLHSWEAWGTSPTTACPDDDGSIGISPAATAAWRAQAVTRGSTPQVGRADAYLQMASRATRSGIEGVFPNVWPINVFEPCWSLYTLHLAGLFAHPALAEAVRVIVAQLDARLGVHGLGPALHFAADADDTAVALCVLHLAGRDPAVDALRHFEIGELFVTFPGERNASVSTNIHALHALRLLGKPAAGASAYVEANRNPHGLWDNEKWHVSWLYPTAHAVAALAQGKPQWRDERALAALLQAQRDDGGWGAGRGSTFEETAYALFALHVMDGSEEATGRRRIAQVVARALEWMLARHAAHGLPQTPLWIGKELYCPTRVVRVAELAGLWLALRWGRRVLAEGAGAAP.

2 PFTB repeats span residues 45-86 (RQDA…QRAD) and 401-443 (DERA…DGSE).

This is an uncharacterized protein from Bradyrhizobium diazoefficiens (strain JCM 10833 / BCRC 13528 / IAM 13628 / NBRC 14792 / USDA 110).